Here is a 352-residue protein sequence, read N- to C-terminus: Phosphoribosylformylglycinamidine cyclo-ligase (352 aa).

Belongs to the AIR synthase family.

The protein resides in the cytoplasm. It carries out the reaction 2-formamido-N(1)-(5-O-phospho-beta-D-ribosyl)acetamidine + ATP = 5-amino-1-(5-phospho-beta-D-ribosyl)imidazole + ADP + phosphate + H(+). It participates in purine metabolism; IMP biosynthesis via de novo pathway; 5-amino-1-(5-phospho-D-ribosyl)imidazole from N(2)-formyl-N(1)-(5-phospho-D-ribosyl)glycinamide: step 2/2. The protein is Phosphoribosylformylglycinamidine cyclo-ligase of Azoarcus sp. (strain BH72).